Here is a 285-residue protein sequence, read N- to C-terminus: Integrin alpha-1 (285 aa).

Residues 1–285 (ENMTFGTTLV…HYSQDWVMLG (285 aa)) lie on the Extracellular side of the membrane. N-linked (GlcNAc...) asparagine glycosylation is found at N2, N40, N208, and N232. The VWFA domain maps to 66 to 279 (IVLDGSNSIY…QAGFSAHYSQ (214 aa)).

It belongs to the integrin alpha chain family. In terms of assembly, heterodimer of an alpha and a beta subunit. Alpha-1 associates with beta-1.

It localises to the membrane. Functionally, integrin alpha-1/beta-1 is a receptor for laminin and collagen. It recognizes the proline-hydroxylated sequence G-F-P-G-E-R in collagen. Involved in anchorage-dependent, negative regulation of EGF-stimulated cell growth. The chain is Integrin alpha-1 (ITGA1) from Gallus gallus (Chicken).